A 264-amino-acid chain; its full sequence is Small ribosomal subunit protein uS2 (264 aa).

A disordered region spans residues 233–264 (AQTQAGGKAEQEAPATEEAADAQTEEAATPAE).

This sequence belongs to the universal ribosomal protein uS2 family.

The chain is Small ribosomal subunit protein uS2 from Psychrobacter arcticus (strain DSM 17307 / VKM B-2377 / 273-4).